The primary structure comprises 123 residues: Putative membrane protein insertion efficiency factor (123 aa).

The interval 1–23 is disordered; sequence MGSCGGKHTGKGAPKPYSRNFTD.

The protein belongs to the UPF0161 family.

Its subcellular location is the cell inner membrane. Could be involved in insertion of integral membrane proteins into the membrane. The sequence is that of Putative membrane protein insertion efficiency factor from Brucella ovis (strain ATCC 25840 / 63/290 / NCTC 10512).